The sequence spans 107 residues: Putative double-stranded DNA mimic protein YpsIP31758_1954 (107 aa).

The protein belongs to the putative dsDNA mimic protein family.

In terms of biological role, may act as a double-stranded DNA (dsDNA) mimic. Probably regulates the activity of a dsDNA-binding protein. In Yersinia pseudotuberculosis serotype O:1b (strain IP 31758), this protein is Putative double-stranded DNA mimic protein YpsIP31758_1954.